The sequence spans 248 residues: tRNA (guanine-N(1)-)-methyltransferase (248 aa).

Residues Gly-113 and 133 to 138 (IGDFVL) each bind S-adenosyl-L-methionine.

This sequence belongs to the RNA methyltransferase TrmD family. As to quaternary structure, homodimer.

It localises to the cytoplasm. The catalysed reaction is guanosine(37) in tRNA + S-adenosyl-L-methionine = N(1)-methylguanosine(37) in tRNA + S-adenosyl-L-homocysteine + H(+). Functionally, specifically methylates guanosine-37 in various tRNAs. This is tRNA (guanine-N(1)-)-methyltransferase from Dehalococcoides mccartyi (strain ATCC BAA-2266 / KCTC 15142 / 195) (Dehalococcoides ethenogenes (strain 195)).